We begin with the raw amino-acid sequence, 185 residues long: Serine/arginine-rich splicing factor RSZ21A (185 aa).

Positions 2 to 73 (ARVYVGNLDP…WRVELSRNAS (72 aa)) constitute an RRM domain. The CCHC-type zinc finger occupies 87-104 (SKCYECGETGHFARECRL). Residues 109–185 (GGLGSGRRRS…YDNGYRRSRS (77 aa)) form a disordered region. Basic residues predominate over residues 114-131 (GRRRSRSRSRSRSPRYRR). 2 stretches are compositionally biased toward low complexity: residues 132–145 (SPSYGRRSYSPAGR) and 152–163 (VSPARARSYSRS).

The protein belongs to the splicing factor SR family. Post-translationally, extensively phosphorylated on serine residues in the RS domain. In terms of tissue distribution, expressed in roots, leaves and immature seeds.

The protein resides in the nucleus. Its function is as follows. Involved in pre-mRNA splicing. The polypeptide is Serine/arginine-rich splicing factor RSZ21A (RSZ21A) (Oryza sativa subsp. japonica (Rice)).